Consider the following 344-residue polypeptide: Adenosine deaminase (344 aa).

Zn(2+)-binding residues include His-14 and His-16. Positions 16, 18, and 177 each coordinate substrate. His-204 contacts Zn(2+). The active-site Proton donor is the Glu-207. Residue Asp-284 participates in Zn(2+) binding.

It belongs to the metallo-dependent hydrolases superfamily. Adenosine and AMP deaminases family. Adenosine deaminase subfamily. Zn(2+) is required as a cofactor.

The enzyme catalyses adenosine + H2O + H(+) = inosine + NH4(+). It catalyses the reaction 2'-deoxyadenosine + H2O + H(+) = 2'-deoxyinosine + NH4(+). Catalyzes the hydrolytic deamination of adenosine and 2-deoxyadenosine. The protein is Adenosine deaminase of Haemophilus ducreyi (strain 35000HP / ATCC 700724).